Reading from the N-terminus, the 466-residue chain is tRNA(Ile)-lysidine synthase (466 aa).

42–47 is a binding site for ATP; it reads SGGVDS.

This sequence belongs to the tRNA(Ile)-lysidine synthase family.

It is found in the cytoplasm. It catalyses the reaction cytidine(34) in tRNA(Ile2) + L-lysine + ATP = lysidine(34) in tRNA(Ile2) + AMP + diphosphate + H(+). Ligates lysine onto the cytidine present at position 34 of the AUA codon-specific tRNA(Ile) that contains the anticodon CAU, in an ATP-dependent manner. Cytidine is converted to lysidine, thus changing the amino acid specificity of the tRNA from methionine to isoleucine. The chain is tRNA(Ile)-lysidine synthase from Anaplasma marginale (strain St. Maries).